A 266-amino-acid polypeptide reads, in one-letter code: Agamous-like MADS-box protein AGL97 (266 aa).

The MADS-box domain maps to 3-63 (GVKRKIAIEK…SNSNAAFYSF (61 aa)). A coiled-coil region spans residues 88 to 130 (WEDESLLKSENLEELREAMDSMSTMLRDLKELEKQRDHQTQTL).

In terms of assembly, interacts with AGL27 and AGL62.

Its subcellular location is the nucleus. In terms of biological role, putative transcription factor. The protein is Agamous-like MADS-box protein AGL97 (AGL97) of Arabidopsis thaliana (Mouse-ear cress).